The primary structure comprises 688 residues: Glycine--tRNA ligase beta subunit (688 aa).

Belongs to the class-II aminoacyl-tRNA synthetase family. As to quaternary structure, tetramer of two alpha and two beta subunits.

The protein localises to the cytoplasm. It catalyses the reaction tRNA(Gly) + glycine + ATP = glycyl-tRNA(Gly) + AMP + diphosphate. The chain is Glycine--tRNA ligase beta subunit from Listeria monocytogenes serovar 1/2a (strain ATCC BAA-679 / EGD-e).